Here is a 380-residue protein sequence, read N- to C-terminus: Selenoprotein P (380 aa).

Residues 1-19 (MWRSLGLALALCLLPYGGA) form the signal peptide. U59 is a non-standard amino acid (selenocysteine). N83, N176, and N195 each carry an N-linked (GlcNAc...) asparagine glycan. A disordered region spans residues 196-257 (KTAEPSEAHS…RGQHRQGHLE (62 aa)). Polar residues predominate over residues 221–237 (SKPSENQQPGPSETTLP). Residues 241–253 (LHHHHRHRGQHRQ) show a composition bias toward basic residues. Residue U259 is a non-standard amino acid, selenocysteine. Phosphoserine is present on S264. Residues U277, U318, U330, and U352 are each a non-standard amino acid (selenocysteine). Positions 346-380 (RSPPAAUQNQPMNPMEANPNUSUDNQTRKUKUHSN) are disordered. Over residues 348-360 (PPAAUQNQPMNPM) the composition is skewed to low complexity. N-linked (GlcNAc...) asparagine glycosylation occurs at N365. Residues U366 and U368 are each a non-standard amino acid (selenocysteine). N370 carries an N-linked (GlcNAc...) asparagine glycan. Non-standard amino acids (selenocysteine) are located at U375 and U377.

Belongs to the selenoprotein P family. Phosphorylation sites are present in the extracellular medium. In the kidney, expressed in the cortex with no expression observed in the medulla (at protein level). Expressed by the liver and secreted in plasma.

It localises to the secreted. Its function is as follows. Might be responsible for some of the extracellular antioxidant defense properties of selenium or might be involved in the transport of selenium. May supply selenium to tissues such as brain and testis. The sequence is that of Selenoprotein P from Mus musculus (Mouse).